We begin with the raw amino-acid sequence, 189 residues long: Protein GrpE (189 aa).

Residues 1-24 are disordered; that stretch reads MADEQTVDTQNPEANQAPEASGDD.

Belongs to the GrpE family. Homodimer.

It localises to the cytoplasm. Its function is as follows. Participates actively in the response to hyperosmotic and heat shock by preventing the aggregation of stress-denatured proteins, in association with DnaK and GrpE. It is the nucleotide exchange factor for DnaK and may function as a thermosensor. Unfolded proteins bind initially to DnaJ; upon interaction with the DnaJ-bound protein, DnaK hydrolyzes its bound ATP, resulting in the formation of a stable complex. GrpE releases ADP from DnaK; ATP binding to DnaK triggers the release of the substrate protein, thus completing the reaction cycle. Several rounds of ATP-dependent interactions between DnaJ, DnaK and GrpE are required for fully efficient folding. The chain is Protein GrpE from Pseudomonas fluorescens (strain Pf0-1).